A 1499-amino-acid polypeptide reads, in one-letter code: Phospholipid-transporting ATPase VA (1499 aa).

A disordered region spans residues Met-1 to Arg-53. Residues Met-1–Pro-86 lie on the Cytoplasmic side of the membrane. The span at Gly-15–Thr-26 shows a compositional bias: basic residues. Residues Ala-87–Phe-106 form a helical membrane-spanning segment. The Exoplasmic loop segment spans residues Gln-107–Leu-110. The chain crosses the membrane as a helical span at residues Ala-111 to Trp-128. Residues Glu-129–Asp-309 are Cytoplasmic-facing. The chain crosses the membrane as a helical span at residues Val-310–Ile-332. Residues Trp-333 to Phe-362 lie on the Exoplasmic loop side of the membrane. A helical membrane pass occupies residues Leu-363–Val-384. The Cytoplasmic portion of the chain corresponds to Lys-385–Asn-1087. Catalysis depends on Asp-427, which acts as the 4-aspartylphosphate intermediate. Residues Asp-427, Lys-428, and Thr-429 each coordinate ATP. Asp-427 is a Mg(2+) binding site. Thr-429 contributes to the Mg(2+) binding site. Residues Ala-464–Ile-531 are disordered. The residue at position 466 (Ser-466) is a Phosphoserine. Polar residues predominate over residues Ser-477 to Thr-499. ATP-binding residues include Glu-700, Phe-742, Lys-766, Arg-809, Thr-889, Gly-890, Asp-891, Arg-1005, and Lys-1011. Position 1031 (Asp-1031) interacts with Mg(2+). ATP contacts are provided by Asn-1034 and Asp-1035. Asp-1035 contributes to the Mg(2+) binding site. The helical transmembrane segment at Met-1088–Phe-1108 threads the bilayer. The Exoplasmic loop segment spans residues Phe-1109 to Asp-1119. The chain crosses the membrane as a helical span at residues Gln-1120–Val-1140. The Cytoplasmic segment spans residues Leu-1141–Thr-1170. A helical membrane pass occupies residues Phe-1171–Ala-1192. The Exoplasmic loop segment spans residues Tyr-1193–Asp-1199. The chain crosses the membrane as a helical span at residues Leu-1200–Glu-1222. Over Thr-1223 to Trp-1228 the chain is Cytoplasmic. The chain crosses the membrane as a helical span at residues Leu-1229–Asn-1249. Over Ala-1250–Ala-1267 the chain is Exoplasmic loop. The helical transmembrane segment at Leu-1268–Phe-1292 threads the bilayer. Residues Arg-1293 to Gln-1499 lie on the Cytoplasmic side of the membrane. 2 disordered regions span residues Thr-1311 to His-1356 and Asp-1464 to Gln-1499. The segment covering Leu-1330 to Ser-1340 has biased composition (basic and acidic residues). Over residues Gly-1341–His-1356 the composition is skewed to polar residues.

It belongs to the cation transport ATPase (P-type) (TC 3.A.3) family. Type IV subfamily. In terms of assembly, component of a P4-ATPase flippase complex which consists of a catalytic alpha subunit ATP10A and an accessory beta subunit TMEM30A. The cofactor is Mg(2+). Autophosphorylated at the conserved aspartate of the P-type ATPase signature sequence. Widely expressed, with highest levels in kidney, followed by lung, brain, prostate, testis, ovary and small intestine.

It is found in the cell membrane. Its subcellular location is the endoplasmic reticulum membrane. The enzyme catalyses ATP + H2O + phospholipidSide 1 = ADP + phosphate + phospholipidSide 2.. The catalysed reaction is a 1,2-diacyl-sn-glycero-3-phosphocholine(out) + ATP + H2O = a 1,2-diacyl-sn-glycero-3-phosphocholine(in) + ADP + phosphate + H(+). It catalyses the reaction a beta-D-glucosyl-(1&lt;-&gt;1')-N-acylsphing-4-enine(out) + ATP + H2O = a beta-D-glucosyl-(1&lt;-&gt;1')-N-acylsphing-4-enine(in) + ADP + phosphate + H(+). Its activity is regulated as follows. Inhibited under hypotonic conditions. Functionally, catalytic component of P4-ATPase flippase complex, which catalyzes the hydrolysis of ATP coupled to the transport of phosphatidylcholine (PC) from the outer to the inner leaflet of the plasma membrane. Initiates inward plasma membrane bending and recruitment of Bin/amphiphysin/Rvs (BAR) domain-containing proteins involved in membrane tubulation and cell trafficking. Facilitates ITGB1/beta1 integrin endocytosis, delaying cell adhesion and cell spreading on extracellular matrix. Has low flippase activity toward glucosylceramide (GlcCer). The chain is Phospholipid-transporting ATPase VA from Homo sapiens (Human).